A 198-amino-acid polypeptide reads, in one-letter code: Glycerol-3-phosphate acyltransferase (198 aa).

5 consecutive transmembrane segments (helical) span residues 2-22 (IIDL…FGVL), 53-73 (LGFI…VIAT), 79-99 (PFMY…SCFL), 113-133 (VLIP…TFFI), and 152-172 (IILF…IMAL).

This sequence belongs to the PlsY family. In terms of assembly, probably interacts with PlsX.

Its subcellular location is the cell membrane. The enzyme catalyses an acyl phosphate + sn-glycerol 3-phosphate = a 1-acyl-sn-glycero-3-phosphate + phosphate. It participates in lipid metabolism; phospholipid metabolism. In terms of biological role, catalyzes the transfer of an acyl group from acyl-phosphate (acyl-PO(4)) to glycerol-3-phosphate (G3P) to form lysophosphatidic acid (LPA). This enzyme utilizes acyl-phosphate as fatty acyl donor, but not acyl-CoA or acyl-ACP. The polypeptide is Glycerol-3-phosphate acyltransferase (Lawsonia intracellularis (strain PHE/MN1-00)).